Reading from the N-terminus, the 238-residue chain is 7-cyano-7-deazaguanine synthase (238 aa).

15-25 (FSGGQDSTTCL) is an ATP binding site. Residues Cys-203, Cys-218, Cys-221, and Cys-224 each contribute to the Zn(2+) site.

Belongs to the QueC family. The cofactor is Zn(2+).

The catalysed reaction is 7-carboxy-7-deazaguanine + NH4(+) + ATP = 7-cyano-7-deazaguanine + ADP + phosphate + H2O + H(+). The protein operates within purine metabolism; 7-cyano-7-deazaguanine biosynthesis. Catalyzes the ATP-dependent conversion of 7-carboxy-7-deazaguanine (CDG) to 7-cyano-7-deazaguanine (preQ(0)). This is 7-cyano-7-deazaguanine synthase from Alkalilimnicola ehrlichii (strain ATCC BAA-1101 / DSM 17681 / MLHE-1).